The primary structure comprises 172 residues: Iron-sulfur cluster assembly protein SufA (172 aa).

The signal sequence occupies residues 1-19 (MFINIFLFLFAATINISSS). The [4Fe-4S] cluster site is built by C96, C164, and C166.

The protein belongs to the HesB/IscA family. As to quaternary structure, homodimer.

It localises to the plastid. The protein resides in the apicoplast. The protein operates within cofactor biosynthesis; iron-sulfur cluster biosynthesis. Participates in the sulfur mobilization (SUF) pathway for iron-sulfur (Fe-S) cluster biogenesis. Involved in the pre-assembly of [4Fe-4S] clusters and their transfer to target proteins. In Plasmodium berghei (strain Anka), this protein is Iron-sulfur cluster assembly protein SufA.